Here is a 72-residue protein sequence, read N- to C-terminus: Large ribosomal subunit protein bL31 (72 aa).

Cysteine 16, cysteine 18, cysteine 38, and cysteine 41 together coordinate Zn(2+).

This sequence belongs to the bacterial ribosomal protein bL31 family. Type A subfamily. In terms of assembly, part of the 50S ribosomal subunit. Zn(2+) is required as a cofactor.

In terms of biological role, binds the 23S rRNA. The chain is Large ribosomal subunit protein bL31 from Aromatoleum aromaticum (strain DSM 19018 / LMG 30748 / EbN1) (Azoarcus sp. (strain EbN1)).